A 397-amino-acid chain; its full sequence is MSKIIAINAGSSSLKFQLFEMPSETVLTKGLVERIGLEDSIFTITVDGEKQKEITNIPDHAVAVNMLLKKLTENGIVKSLDEIGGIGHRVVHGGEKFADSVLITDEVLADIEELSDLAPLHNPANVVGIKAFQEVLPNVPAVAVFDTAFHQTMPESAFLYSLPYEYYEKFGIRKYGFHGTSHKYVTERAAELLGRPLESLSLLSCHLGNGASIAAVEGGKSIDTSMGFTPLAGVTMGTRSGNIDPALIPYIMEKTGQTVEEVVSVLNKKSGMLGLTGYSSDLRDIIAKEEEGDHRAKVALDVFVSRIHKYIGSYTARMKGVDAIIFTAGVGENSAIIRERVLEGLEYMGVYFDAKRNNVFGEEAFINFPHSPVKIIVIPTDEEVMIARDVLRLGNIG.

Asn-8 contacts Mg(2+). Lys-15 serves as a coordination point for ATP. Arg-89 contributes to the substrate binding site. Residue Asp-146 is the Proton donor/acceptor of the active site. ATP contacts are provided by residues 206-210, 281-283, and 329-333; these read HLGNG, DLR, and GVGEN. Glu-382 contacts Mg(2+).

This sequence belongs to the acetokinase family. As to quaternary structure, homodimer. Requires Mg(2+) as cofactor. Mn(2+) serves as cofactor.

The protein localises to the cytoplasm. It catalyses the reaction acetate + ATP = acetyl phosphate + ADP. It participates in metabolic intermediate biosynthesis; acetyl-CoA biosynthesis; acetyl-CoA from acetate: step 1/2. Its function is as follows. Catalyzes the formation of acetyl phosphate from acetate and ATP. Can also catalyze the reverse reaction. This is Acetate kinase from Bacillus anthracis.